The following is a 308-amino-acid chain: 11-beta-hydroxysteroid dehydrogenase-like 2 (308 aa).

A helical; Signal-anchor for type II membrane protein transmembrane segment spans residues 10–30 (FLLPPLTISFLVLFYPFYLFT). Residues 53-79 (GASS…VARR) and D104 each bind NADP(+). Residue S183 participates in substrate binding. Y196 serves as the catalytic Proton acceptor. Residues 196–200 (YSASK) and K200 each bind NADP(+).

The protein belongs to the short-chain dehydrogenases/reductases (SDR) family.

It is found in the membrane. The sequence is that of 11-beta-hydroxysteroid dehydrogenase-like 2 (HSD2) from Arabidopsis thaliana (Mouse-ear cress).